Consider the following 3305-residue polypeptide: Apolipophorins (3305 aa).

The N-terminal stretch at methionine 1–glycine 23 is a signal peptide. The Vitellogenin domain occupies phenylalanine 39–valine 640. N-linked (GlcNAc...) asparagine glycosylation is found at asparagine 643 and asparagine 2769. The 167-residue stretch at leucine 2733–proline 2899 folds into the VWFD domain. Cysteine 2757 and cysteine 2898 are oxidised to a cystine.

Post-translationally, cleaved into 2 chains by furin protease. However, prevention of cleavage does not impair its function. In terms of processing, N-glycosylated.

The protein localises to the secreted. Functionally, constitutes the major component of lipophorin, which mediates transport for various types of lipids in hemolymph. Acts by forming lipoprotein particles that bind lipoproteins and lipids. May be required for morphogens wingless (wg) and hedgehog (hh) function, possibly by acting as vehicles for the movement of wg and hh. This Manduca sexta (Tobacco hawkmoth) protein is Apolipophorins.